We begin with the raw amino-acid sequence, 105 residues long: Small ribosomal subunit protein bS20 (105 aa).

This sequence belongs to the bacterial ribosomal protein bS20 family.

Functionally, binds directly to 16S ribosomal RNA. This Caldanaerobacter subterraneus subsp. tengcongensis (strain DSM 15242 / JCM 11007 / NBRC 100824 / MB4) (Thermoanaerobacter tengcongensis) protein is Small ribosomal subunit protein bS20.